We begin with the raw amino-acid sequence, 389 residues long: Major outer membrane porin (389 aa).

Belongs to the chlamydial porin (CP) (TC 1.B.2) family. As to quaternary structure, part of a disulfide cross-linked outer membrane complex (COMC) composed of the major outer membrane porin (MOMP), the small cysteine-rich protein (OmcA) and the large cysteine-rich periplasmic protein (OmcB).

The protein resides in the cell outer membrane. In elementary bodies (EBs, the infectious stage, which is able to survive outside the host cell) provides the structural integrity of the outer envelope through disulfide cross-links with the small cysteine-rich protein and the large cysteine-rich periplasmic protein. It has been described in publications as the Sarkosyl-insoluble COMC (Chlamydia outer membrane complex), and serves as the functional equivalent of peptidoglycan. Its function is as follows. Permits diffusion of specific solutes through the outer membrane. This chain is Major outer membrane porin (ompA), found in Chlamydia pneumoniae (Chlamydophila pneumoniae).